The following is an 83-amino-acid chain: Small ribosomal subunit protein bS16 (83 aa).

The protein belongs to the bacterial ribosomal protein bS16 family.

This chain is Small ribosomal subunit protein bS16, found in Finegoldia magna (strain ATCC 29328 / DSM 20472 / WAL 2508) (Peptostreptococcus magnus).